We begin with the raw amino-acid sequence, 483 residues long: Membrane-bound lytic murein transglycosylase F (483 aa).

The signal sequence occupies residues 1 to 18 (MKGLIARFIAGFALLLWA). Positions 19–267 (WDMVFPWQQL…RIEEKYFNHL (249 aa)) are non-LT domain. The interval 269 to 483 (HFDYVDIQSY…SKESDSTLKE (215 aa)) is LT domain. The active site involves glutamate 312. Positions 458–483 (QQIQNNEEQPSVPQEISKESDSTLKE) are disordered. The span at 473-483 (ISKESDSTLKE) shows a compositional bias: basic and acidic residues.

It in the N-terminal section; belongs to the bacterial solute-binding protein 3 family. This sequence in the C-terminal section; belongs to the transglycosylase Slt family.

The protein localises to the cell outer membrane. It carries out the reaction Exolytic cleavage of the (1-&gt;4)-beta-glycosidic linkage between N-acetylmuramic acid (MurNAc) and N-acetylglucosamine (GlcNAc) residues in peptidoglycan, from either the reducing or the non-reducing ends of the peptidoglycan chains, with concomitant formation of a 1,6-anhydrobond in the MurNAc residue.. In terms of biological role, murein-degrading enzyme that degrades murein glycan strands and insoluble, high-molecular weight murein sacculi, with the concomitant formation of a 1,6-anhydromuramoyl product. Lytic transglycosylases (LTs) play an integral role in the metabolism of the peptidoglycan (PG) sacculus. Their lytic action creates space within the PG sacculus to allow for its expansion as well as for the insertion of various structures such as secretion systems and flagella. The sequence is that of Membrane-bound lytic murein transglycosylase F from Actinobacillus pleuropneumoniae serotype 3 (strain JL03).